The following is a 457-amino-acid chain: Cysteine--tRNA ligase (457 aa).

C27 provides a ligand contact to Zn(2+). A 'HIGH' region motif is present at residues 29-39; that stretch reads PTVYDFAHIGN. Residues C211, H236, and E240 each contribute to the Zn(2+) site. The 'KMSKS' region motif lies at 269-273; the sequence is KMSKS. K272 contributes to the ATP binding site.

This sequence belongs to the class-I aminoacyl-tRNA synthetase family. As to quaternary structure, monomer. It depends on Zn(2+) as a cofactor.

The protein resides in the cytoplasm. It catalyses the reaction tRNA(Cys) + L-cysteine + ATP = L-cysteinyl-tRNA(Cys) + AMP + diphosphate. The polypeptide is Cysteine--tRNA ligase (Ehrlichia ruminantium (strain Welgevonden)).